Consider the following 705-residue polypeptide: Dynein axonemal intermediate chain 1 (705 aa).

Disordered stretches follow at residues 1–44 (MPSK…AVRP) and 122–169 (AGSQ…DVPA). 2 positions are modified to phosphoserine: S124 and S127. Over residues 124 to 135 (SQESVKVVTSDT) the composition is skewed to polar residues. A compositionally biased stretch (acidic residues) spans 136–159 (EILEEEEEPKEGEGEGEGEAEGEA). 5 WD repeats span residues 386–426 (SSES…SQPC), 435–478 (KHTD…LVHI), 543–583 (AHNM…PMFI), 585–625 (DLNA…YEAI), and 633–672 (KKKN…RKMP).

It belongs to the dynein intermediate chain family. In terms of assembly, consists of at least two heavy chains and a number of intermediate and light chains. Interacts with BICD2. Interacts with CFAP45 and CFAP52. Interacts with CFAP53.

It is found in the cytoplasm. It localises to the cytoskeleton. Its subcellular location is the cilium axoneme. In terms of biological role, part of the dynein complex of respiratory cilia. This chain is Dynein axonemal intermediate chain 1 (Dnai1), found in Rattus norvegicus (Rat).